Here is a 1193-residue protein sequence, read N- to C-terminus: Dynamin-like protein A (1193 aa).

The D1, associates with and fuses membranes, tethers lipsomes stretch occupies residues 1 to 609 (MTDQNRKELL…AFRERVKRLE (609 aa)). The tract at residues 50-57 (GHYSAGKS) is G1 motif D1. The segment at 76-78 (TSA) is G2 motif D1. Residues 141–144 (DTPG) are G3 motif D1. Residues 199-202 (NQID) are G4 motif D1. Positions 561–1193 (MPKSEIKMEQ…WKNSDNTIKM (633 aa)) are D2, does not associate with membranes. The G1 motif D2 stretch occupies residues 619-626 (GGFSSGKS). The segment at 645 to 647 (TTA) is G2 motif D2. Positions 774–777 (DTPG) are G3 motif D2. The interval 837–840 (NAAD) is G4 motif D2.

Belongs to the TRAFAC class dynamin-like GTPase superfamily. Dynamin/Fzo/YdjA family. As to quaternary structure, homodimer in solution. Both D1 and D2 domains interact with YwpG, YneK interacts only with D1 while RNase Y (rny) only interacts with whole protein. Probably oligomerizes at damaged membrane sites. The cofactor is Mg(2+).

The protein localises to the cell membrane. The enzyme catalyses GTP + H2O = GDP + phosphate + H(+). Its function is as follows. Mediates lipid mixing of vesicles and full mixing of their contents in the absence and presence of GTP. Tethers and mixes small vesicles better than larger ones, indicating a curvature preference. GTP slows down DynA-mediated lipid fusion, perhaps controlling its activity. Prefers phospholipid composition close to the B.subtilis membrane; requires phosphatidylglycerol for fusion has no activity on pure phosphatidylethanolamine vesicles. Regulates membrane lipid diffusion. Required to prevent membrane damage when exposed to low levels of membrane-damaging antibiotics or to bacteriophage. Probably surveys the cell membrane for stress; localizes to sites of membrane damage (treatment with nisin) and forms foci in cells treated with pore-forming compounds (CCCP). May assist membrane repair, possibly by membrane tethering and fusion. Probably functions both in early and late cell division, affects the proper formation of the FtsZ ring. Plays a non-redundant role with flottilin (floT) in membrane dynamics and cell shape. Probably able to bend membranes. Tethers liposomes and mediates their fusion; this does not require GTPase activity or the presence of GTP. Both GTPase domains (dynamin-type G) are required for GTPase activity. In terms of biological role, has intrinsic affinity for membranes and membrane distortion capability; causes tubulation and membrane distortion when expressed in a Drosophila cell line. The protein is Dynamin-like protein A of Bacillus subtilis (strain 168).